The sequence spans 508 residues: Probable cytosol aminopeptidase (508 aa).

2 residues coordinate Mn(2+): K274 and D279. The active site involves K286. Residues D297, D356, and E358 each contribute to the Mn(2+) site. Residue R360 is part of the active site.

This sequence belongs to the peptidase M17 family. It depends on Mn(2+) as a cofactor.

Its subcellular location is the cytoplasm. It carries out the reaction Release of an N-terminal amino acid, Xaa-|-Yaa-, in which Xaa is preferably Leu, but may be other amino acids including Pro although not Arg or Lys, and Yaa may be Pro. Amino acid amides and methyl esters are also readily hydrolyzed, but rates on arylamides are exceedingly low.. It catalyses the reaction Release of an N-terminal amino acid, preferentially leucine, but not glutamic or aspartic acids.. Functionally, presumably involved in the processing and regular turnover of intracellular proteins. Catalyzes the removal of unsubstituted N-terminal amino acids from various peptides. This Paraburkholderia phytofirmans (strain DSM 17436 / LMG 22146 / PsJN) (Burkholderia phytofirmans) protein is Probable cytosol aminopeptidase.